Reading from the N-terminus, the 246-residue chain is MHPVINFSHVTKEYPLYHHIGSGIKDLIFHPKRAFQLLKGRKYLAIEDVSFTVGKGEAVALIGRNGAGKSTSLGLVAGVIKPTKGTVTTEGRVASMLELGGGFHPELTGRENIYLNATLLGLRRKEVQQRMERIIEFSELGEFIDEPIRVYSSGMLAKLGFSVISQVEPDILIIDEVLAVGDIAFQAKCIQTIRDFKKRGVTILFVSHNMSDVEKICDRVIWIENHRLREVGSAERIIELYKQAMA.

One can recognise an ABC transporter domain in the interval 22-246 (SGIKDLIFHP…IIELYKQAMA (225 aa)). 63–70 (GRNGAGKS) contributes to the ATP binding site.

It belongs to the ABC transporter superfamily.

The protein localises to the cell inner membrane. In terms of biological role, may form an ATP-driven O-antigen export apparatus, in association with RfbA. The protein is O-antigen export system ATP-binding protein RfbB (rfbB) of Klebsiella pneumoniae.